The primary structure comprises 172 residues: Pollen-specific protein-like At4g18596 (172 aa).

The first 27 residues, 1–27, serve as a signal peptide directing secretion; the sequence is MASKAIFFFFVSAVCLSSLAGVAIADA. 3 cysteine pairs are disulfide-bonded: Cys41–Cys112, Cys44–Cys157, and Cys65–Cys100. The N-linked (GlcNAc...) asparagine glycan is linked to Asn70.

Belongs to the Ole e I family.

It is found in the secreted. This chain is Pollen-specific protein-like At4g18596, found in Arabidopsis thaliana (Mouse-ear cress).